The sequence spans 460 residues: tRNA modification GTPase MnmE (460 aa).

(6S)-5-formyl-5,6,7,8-tetrahydrofolate contacts are provided by arginine 29, glutamate 91, and arginine 131. Positions 226–383 (GLRVALVGRP…LVQAVLERCG (158 aa)) constitute a TrmE-type G domain. Asparagine 236 provides a ligand contact to K(+). GTP is bound by residues 236 to 241 (NVGKSS), 255 to 261 (TDLPGTT), and 280 to 283 (DTAG). Serine 240 contacts Mg(2+). Positions 255, 257, and 260 each coordinate K(+). Threonine 261 lines the Mg(2+) pocket. Lysine 460 contacts (6S)-5-formyl-5,6,7,8-tetrahydrofolate.

This sequence belongs to the TRAFAC class TrmE-Era-EngA-EngB-Septin-like GTPase superfamily. TrmE GTPase family. Homodimer. Heterotetramer of two MnmE and two MnmG subunits. The cofactor is K(+).

Its subcellular location is the cytoplasm. Functionally, exhibits a very high intrinsic GTPase hydrolysis rate. Involved in the addition of a carboxymethylaminomethyl (cmnm) group at the wobble position (U34) of certain tRNAs, forming tRNA-cmnm(5)s(2)U34. The protein is tRNA modification GTPase MnmE of Synechococcus sp. (strain WH7803).